Consider the following 98-residue polypeptide: NADH-ubiquinone oxidoreductase chain 4L (98 aa).

3 helical membrane passes run 1-21 (MSMV…GLLM), 29-49 (SLLC…LTIL), and 61-81 (IILL…LVMV).

It belongs to the complex I subunit 4L family. In terms of assembly, core subunit of respiratory chain NADH dehydrogenase (Complex I) which is composed of 45 different subunits.

Its subcellular location is the mitochondrion inner membrane. It catalyses the reaction a ubiquinone + NADH + 5 H(+)(in) = a ubiquinol + NAD(+) + 4 H(+)(out). Its function is as follows. Core subunit of the mitochondrial membrane respiratory chain NADH dehydrogenase (Complex I) which catalyzes electron transfer from NADH through the respiratory chain, using ubiquinone as an electron acceptor. Part of the enzyme membrane arm which is embedded in the lipid bilayer and involved in proton translocation. The sequence is that of NADH-ubiquinone oxidoreductase chain 4L (MT-ND4L) from Bos indicus (Zebu).